Reading from the N-terminus, the 198-residue chain is Recombination protein RecR (198 aa).

The segment at 58–73 adopts a C4-type zinc-finger fold; the sequence is CSICGNYTDSDPCAIC. In terms of domain architecture, Toprim spans 81 to 175; the sequence is SIICVIEQPK…KVTRIAHGVP (95 aa).

It belongs to the RecR family.

May play a role in DNA repair. It seems to be involved in an RecBC-independent recombinational process of DNA repair. It may act with RecF and RecO. This is Recombination protein RecR from Clostridium novyi (strain NT).